We begin with the raw amino-acid sequence, 54 residues long: Potassium channel toxin alpha-KTx 14.3 (54 aa).

The N-terminal stretch at 1-23 is a signal peptide; the sequence is MKIFFAILLILAVCSMAIWTVNG.

The protein belongs to the short scorpion toxin superfamily. Potassium channel inhibitor family. Alpha-KTx 14 subfamily. In terms of processing, contains 3 disulfide bridges. As to expression, expressed by the venom gland.

It localises to the secreted. Functionally, potential blocker of potassium channels. This is Potassium channel toxin alpha-KTx 14.3 from Olivierus martensii (Manchurian scorpion).